Consider the following 432-residue polypeptide: Ribosomal protein uS12 methylthiotransferase RimO (432 aa).

Residues Ile-2–Lys-115 form the MTTase N-terminal domain. Positions 11, 47, 78, 151, 155, and 158 each coordinate [4Fe-4S] cluster. Residues Glu-137 to Ala-367 form the Radical SAM core domain.

The protein belongs to the methylthiotransferase family. RimO subfamily. The cofactor is [4Fe-4S] cluster.

It localises to the cytoplasm. The catalysed reaction is L-aspartate(89)-[ribosomal protein uS12]-hydrogen + (sulfur carrier)-SH + AH2 + 2 S-adenosyl-L-methionine = 3-methylsulfanyl-L-aspartate(89)-[ribosomal protein uS12]-hydrogen + (sulfur carrier)-H + 5'-deoxyadenosine + L-methionine + A + S-adenosyl-L-homocysteine + 2 H(+). Catalyzes the methylthiolation of an aspartic acid residue of ribosomal protein uS12. This chain is Ribosomal protein uS12 methylthiotransferase RimO, found in Moorella thermoacetica (strain ATCC 39073 / JCM 9320).